Here is a 333-residue protein sequence, read N- to C-terminus: Antimicrobial peptides (333 aa).

Positions 1–23 (MVQKGVVFGVLLILFICSTLTSA) are cleaved as a signal peptide. The interval 23–52 (ADSKPNPTKEEEPAKKPDEVSVKSGGPEVS) is disordered. Positions 24–54 (DSKPNPTKEEEPAKKPDEVSVKSGGPEVSED) are cleaved as a propeptide — acidic peptide 1. The segment covering 29–43 (PTKEEEPAKKPDEVS) has biased composition (basic and acidic residues). The residue at position 55 (Q55) is a Pyrrolidone carboxylic acid. Cystine bridges form between C60–C70 and C61–C74. The propeptide at 75-102 (ANAEEAAAAIPEASEELAQEEAPVYSED) is acidic peptide 2. Position 103 is a pyrrolidone carboxylic acid (Q103). Intrachain disulfides connect C108/C118 and C109/C122. Positions 123-148 (QNAEEAAAAIPEATEKAQEAPVYSED) are cleaved as a propeptide — acidic peptide 3. Q149 carries the post-translational modification Pyrrolidone carboxylic acid. Disulfide bonds link C154/C164 and C155/C168. Residues 169-196 (QNAEEAAAAVAIPEASEKAQEGPVYSED) constitute a propeptide, acidic peptide 4. Q197 carries the post-translational modification Pyrrolidone carboxylic acid. Cystine bridges form between C202/C212 and C203/C216. Positions 217-232 (SNAADEVATPEDVEPG) are cleaved as a propeptide — acidic peptide 5. Residue Q233 is modified to Pyrrolidone carboxylic acid. 2 disulfide bridges follow: C238–C248 and C239–C252. Positions 253–278 (HNAAEEATLKAFEEEAAREQPVYSED) are cleaved as a propeptide — acidic peptide 6. Residue Q279 is modified to Pyrrolidone carboxylic acid. Disulfide bonds link C284/C294 and C285/C298. A propeptide spans 299-333 (QSAEEAAAFQAGEVTASLMLIMFKACPCMGPVPSV) (acidic peptide 7).

Post-translationally, the N-terminal of all peptides are blocked. The 4 cysteine residues of all peptides are involved in intrachain disulfide bonds.

The protein resides in the secreted. Plays a role in the defense of the germinating seed against microorganisms, by inhibiting the growth of a range of filamentous fungi and bacteria, especially Gram-positive bacteria. Not cytotoxic for cultured human cells and are the smallest known plant-derived antimicrobial peptides. Peptide IB-AMP4 has a higher antifungal activity than IB-AMP1. This chain is Antimicrobial peptides (AMP), found in Impatiens balsamina (Balsam).